Here is an 844-residue protein sequence, read N- to C-terminus: RPA-related protein RADX (844 aa).

A DNA-binding region (OB) is located at residues 228-331; sequence WHNRKNFPAL…LISTMEICLN (104 aa). Disordered regions lie at residues 571 to 609 and 626 to 664; these read PASE…RPMD and GPTA…TGKS. Over residues 572–587 the composition is skewed to polar residues; it reads ASETLQNASPPSTSQA. The segment covering 590 to 608 has biased composition (basic and acidic residues); it reads KEGHYHERGSKRSQDDRPM. Residues 652-662 show a composition bias toward polar residues; it reads SRENSTANATG.

Its subcellular location is the chromosome. In terms of biological role, single-stranded DNA-binding protein recruited to replication forks to maintain genome stability. Prevents fork collapse by antagonizing the accumulation of RAD51 at forks to ensure the proper balance of fork remodeling and protection without interfering with the capacity of cells to complete homologous recombination of double-strand breaks. In Rattus norvegicus (Rat), this protein is RPA-related protein RADX.